A 932-amino-acid polypeptide reads, in one-letter code: 3-hydroxy-3-methylglutaryl-coenzyme A reductase (932 aa).

The next 6 helical transmembrane spans lie at Val-20–Leu-40, Leu-59–Leu-79, Ile-92–Ile-112, His-113–Ile-133, Met-162–Ile-182, and Val-193–Phe-213. Residue Asn-279 is glycosylated (N-linked (GlcNAc...) asparagine). The chain crosses the membrane as a helical span at residues Ile-322–Ala-342. The linker stretch occupies residues Thr-343–Glu-467. Residues Val-357 to Ala-367 are compositionally biased toward basic and acidic residues. Residues Val-357–Val-442 form a disordered region. Residues Gly-374–Val-403 show a composition bias toward polar residues. Positions Ser-406–Val-421 are enriched in low complexity. A catalytic region spans residues Ile-468 to Ser-932. Residues Glu-575, Lys-707, and Asp-783 each act as charge relay system in the active site. N-linked (GlcNAc...) asparagine glycosylation occurs at Asn-850. The Proton donor role is filled by His-882. An N-linked (GlcNAc...) asparagine glycan is attached at Asn-886. Residue Ser-888 is modified to Phosphoserine; by AMPK.

The protein belongs to the HMG-CoA reductase family.

The protein resides in the endoplasmic reticulum membrane. The enzyme catalyses (R)-mevalonate + 2 NADP(+) + CoA = (3S)-3-hydroxy-3-methylglutaryl-CoA + 2 NADPH + 2 H(+). It participates in metabolic intermediate biosynthesis; (R)-mevalonate biosynthesis; (R)-mevalonate from acetyl-CoA: step 3/3. In terms of biological role, this transmembrane glycoprotein is involved in the control of cholesterol biosynthesis. It is the rate-limiting enzyme of sterol biosynthesis. This Strongylocentrotus purpuratus (Purple sea urchin) protein is 3-hydroxy-3-methylglutaryl-coenzyme A reductase (HMGCR).